The chain runs to 644 residues: Exoribonuclease 2 (644 aa).

Residues 189–516 form the RNB domain; it reads RQDLTALNFV…NHRLLKAVIK (328 aa). One can recognise an S1 motif domain in the interval 561-643; it reads NTRFAAEIID…ETRSIIARPA (83 aa).

This sequence belongs to the RNR ribonuclease family. RNase II subfamily.

Its subcellular location is the cytoplasm. It carries out the reaction Exonucleolytic cleavage in the 3'- to 5'-direction to yield nucleoside 5'-phosphates.. Involved in mRNA degradation. Hydrolyzes single-stranded polyribonucleotides processively in the 3' to 5' direction. In Salmonella enteritidis PT4 (strain P125109), this protein is Exoribonuclease 2.